The following is a 184-amino-acid chain: ATP synthase subunit b, chloroplastic (184 aa).

Residues 27–49 (LATNLINLSVVIGVLIFFGKGVL) traverse the membrane as a helical segment.

The protein belongs to the ATPase B chain family. In terms of assembly, F-type ATPases have 2 components, F(1) - the catalytic core - and F(0) - the membrane proton channel. F(1) has five subunits: alpha(3), beta(3), gamma(1), delta(1), epsilon(1). F(0) has four main subunits: a(1), b(1), b'(1) and c(10-14). The alpha and beta chains form an alternating ring which encloses part of the gamma chain. F(1) is attached to F(0) by a central stalk formed by the gamma and epsilon chains, while a peripheral stalk is formed by the delta, b and b' chains.

It localises to the plastid. The protein localises to the chloroplast thylakoid membrane. F(1)F(0) ATP synthase produces ATP from ADP in the presence of a proton or sodium gradient. F-type ATPases consist of two structural domains, F(1) containing the extramembraneous catalytic core and F(0) containing the membrane proton channel, linked together by a central stalk and a peripheral stalk. During catalysis, ATP synthesis in the catalytic domain of F(1) is coupled via a rotary mechanism of the central stalk subunits to proton translocation. Its function is as follows. Component of the F(0) channel, it forms part of the peripheral stalk, linking F(1) to F(0). The chain is ATP synthase subunit b, chloroplastic from Jasminum nudiflorum (Winter jasmine).